The primary structure comprises 196 residues: Ribosome maturation factor RimP (196 aa).

Residues 164-196 are disordered; that stretch reads LAPQKPNKPGPKKPGHEKKKPSNESAAGKPRAE. Basic residues predominate over residues 173–182; that stretch reads GPKKPGHEKK.

The protein belongs to the RimP family.

It localises to the cytoplasm. Required for maturation of 30S ribosomal subunits. In Xanthomonas euvesicatoria pv. vesicatoria (strain 85-10) (Xanthomonas campestris pv. vesicatoria), this protein is Ribosome maturation factor RimP.